We begin with the raw amino-acid sequence, 366 residues long: Probable dual-specificity RNA methyltransferase RlmN (366 aa).

The active-site Proton acceptor is the E108. The Radical SAM core domain maps to 114–352; sequence YSDRSTLCIS…CTVRDTKGQE (239 aa). A disulfide bridge connects residues C121 and C357. Residues C128, C132, and C135 each coordinate [4Fe-4S] cluster. S-adenosyl-L-methionine contacts are provided by residues 178 to 179, S212, 235 to 237, and N314; these read GE and SLH. Catalysis depends on C357, which acts as the S-methylcysteine intermediate.

This sequence belongs to the radical SAM superfamily. RlmN family. Requires [4Fe-4S] cluster as cofactor.

The protein localises to the cytoplasm. It catalyses the reaction adenosine(2503) in 23S rRNA + 2 reduced [2Fe-2S]-[ferredoxin] + 2 S-adenosyl-L-methionine = 2-methyladenosine(2503) in 23S rRNA + 5'-deoxyadenosine + L-methionine + 2 oxidized [2Fe-2S]-[ferredoxin] + S-adenosyl-L-homocysteine. The catalysed reaction is adenosine(37) in tRNA + 2 reduced [2Fe-2S]-[ferredoxin] + 2 S-adenosyl-L-methionine = 2-methyladenosine(37) in tRNA + 5'-deoxyadenosine + L-methionine + 2 oxidized [2Fe-2S]-[ferredoxin] + S-adenosyl-L-homocysteine. Specifically methylates position 2 of adenine 2503 in 23S rRNA and position 2 of adenine 37 in tRNAs. The polypeptide is Probable dual-specificity RNA methyltransferase RlmN (Corynebacterium glutamicum (strain ATCC 13032 / DSM 20300 / JCM 1318 / BCRC 11384 / CCUG 27702 / LMG 3730 / NBRC 12168 / NCIMB 10025 / NRRL B-2784 / 534)).